Reading from the N-terminus, the 266-residue chain is Zinc transport system ATP-binding protein TroB (266 aa).

Residues 11–243 (VQVDDLTLAY…YVQRAYGGRI (233 aa)) enclose the ABC transporter domain. 43–50 (GPNGAGKS) provides a ligand contact to ATP.

It belongs to the ABC transporter superfamily.

Functionally, part of an ATP-driven transport system TroABCD for zinc. The chain is Zinc transport system ATP-binding protein TroB (troB) from Treponema pallidum (strain Nichols).